Consider the following 266-residue polypeptide: ATP synthase subunit a (266 aa).

A run of 6 helical transmembrane segments spans residues 38-58 (KQML…VLAA), 99-119 (LLFS…IPLI), 126-146 (HVGG…AIGI), 162-182 (GVPW…NFVV), 191-211 (LFAT…GIEY), and 224-244 (SVLV…IMVL).

It belongs to the ATPase A chain family. In terms of assembly, F-type ATPases have 2 components, CF(1) - the catalytic core - and CF(0) - the membrane proton channel. CF(1) has five subunits: alpha(3), beta(3), gamma(1), delta(1), epsilon(1). CF(0) has three main subunits: a(1), b(2) and c(9-12). The alpha and beta chains form an alternating ring which encloses part of the gamma chain. CF(1) is attached to CF(0) by a central stalk formed by the gamma and epsilon chains, while a peripheral stalk is formed by the delta and b chains.

The protein localises to the cell membrane. Key component of the proton channel; it plays a direct role in the translocation of protons across the membrane. In Pseudarthrobacter chlorophenolicus (strain ATCC 700700 / DSM 12829 / CIP 107037 / JCM 12360 / KCTC 9906 / NCIMB 13794 / A6) (Arthrobacter chlorophenolicus), this protein is ATP synthase subunit a.